Here is a 244-residue protein sequence, read N- to C-terminus: U4/U6.U5 tri-snRNP-associated protein 3-like protein C162.01c (244 aa).

Basic and acidic residues-rich tracts occupy residues 1-11 and 20-116; these read MSSSRSGEHRR and ESSR…RRDG. Disordered stretches follow at residues 1–192 and 223–244; these read MSSS…EDEA and KKTKYRQYMNRPGGFNRPLDNE. S121 and S140 each carry phosphoserine. Over residues 126-182 the composition is skewed to basic and acidic residues; sequence GLERKREHEKLQAPSPKEEEERPVDQGDKMDGVKEDKDGSLEVGKSHDAMTRTKSAE. Acidic residues predominate over residues 183–192; sequence EEIVEQEDEA.

This sequence belongs to the SNUT3 family. In terms of assembly, part of a tri-snRNP complex.

It localises to the nucleus. Its function is as follows. May play a role in mRNA splicing. The protein is U4/U6.U5 tri-snRNP-associated protein 3-like protein C162.01c of Schizosaccharomyces pombe (strain 972 / ATCC 24843) (Fission yeast).